The sequence spans 190 residues: GTP cyclohydrolase 1 (190 aa).

Residues Cys-80, His-83, and Cys-151 each contribute to the Zn(2+) site.

The protein belongs to the GTP cyclohydrolase I family. As to quaternary structure, toroid-shaped homodecamer, composed of two pentamers of five dimers.

It carries out the reaction GTP + H2O = 7,8-dihydroneopterin 3'-triphosphate + formate + H(+). The protein operates within cofactor biosynthesis; 7,8-dihydroneopterin triphosphate biosynthesis; 7,8-dihydroneopterin triphosphate from GTP: step 1/1. This chain is GTP cyclohydrolase 1, found in Rickettsia typhi (strain ATCC VR-144 / Wilmington).